We begin with the raw amino-acid sequence, 501 residues long: uncharacterized protein (501 aa).

2 disordered regions span residues 179–404 (EKTS…DETA) and 480–501 (SDDTDDTDDTNNSCSSEVDDSD). The span at 191-200 (SRNESQDKSR) shows a compositional bias: basic and acidic residues. Positions 201 to 214 (DKSRKKVCNTHKNK) are enriched in basic residues. Basic and acidic residues predominate over residues 215–226 (KTLDNVKPDKNI). Over residues 231–274 (SSNKFTTNKPKSNKNSSDSDGSTKTTKSTRSTKSTKSSKSQKST) the composition is skewed to low complexity. Over residues 304–316 (NPKESINHKKNDS) the composition is skewed to basic and acidic residues. The segment covering 333 to 352 (DSTNCRKSNRTTTRDVTNSD) has biased composition (polar residues). Residues 379-403 (EQSDLTEDETEENVSEEDETEEDET) show a composition bias toward acidic residues.

This is an uncharacterized protein from Acanthamoeba polyphaga mimivirus (APMV).